We begin with the raw amino-acid sequence, 285 residues long: Nucleotide-binding protein HI_1146 (285 aa).

8–15 (GRSGAGKS) lines the ATP pocket. 56–59 (DIRN) lines the GTP pocket.

This sequence belongs to the RapZ-like family.

Displays ATPase and GTPase activities. The sequence is that of Nucleotide-binding protein HI_1146 from Haemophilus influenzae (strain ATCC 51907 / DSM 11121 / KW20 / Rd).